The following is a 361-amino-acid chain: Single-stranded DNA-binding protein 3 (361 aa).

Met-1 is subject to N-acetylmethionine. A LisH domain is found at 16–48 (AREKLALYVYEYLLHVGAQKSAQTFLSEIRWEK). 3 positions are modified to asymmetric dimethylarginine: Arg-128, Arg-134, and Arg-138. Disordered stretches follow at residues 140 to 166 (GNQP…QQGH) and 184 to 361 (PMGP…TMSV). Positions 223–241 (PNSANSIPYSSSSPGTYVG) are enriched in low complexity. Pro residues predominate over residues 245–255 (GGGPPGTPIMP). Residues 258 to 269 (ADSTNSSDNIYT) show a composition bias toward polar residues. Gly residues predominate over residues 288–298 (GSDGPMGGMGG). A compositionally biased stretch (low complexity) spans 319–330 (NSPNNISGISNP). Ser-320, Ser-325, and Ser-328 each carry phosphoserine. Thr-333 is modified (phosphothreonine). The span at 346–361 (HSFQNDNYSPSMTMSV) shows a compositional bias: polar residues. Phosphoserine is present on residues Ser-354 and Ser-360.

Its subcellular location is the nucleus. Its function is as follows. May be involved in transcription regulation of the alpha 2(I) collagen gene where it binds to the single-stranded polypyrimidine sequences in the promoter region. This Rattus norvegicus (Rat) protein is Single-stranded DNA-binding protein 3 (Ssbp3).